Reading from the N-terminus, the 426-residue chain is Hemojuvelin (426 aa).

The N-terminal stretch at 1–35 is a signal peptide; sequence MGEPGQSPSPRSSHGSPPTLSTLTLLLLLCGHAHS. Tyrosine 46 is modified (phosphotyrosine). Asparagine 118 is a glycosylation site (N-linked (GlcNAc...) asparagine). The segment at 119 to 142 is disordered; it reads CSRQGPTAPPPPRGPALPGAGSGL. 2 disulfides stabilise this stretch: cysteine 148/cysteine 230 and cysteine 167/cysteine 317. Residues asparagine 213 and asparagine 372 are each glycosylated (N-linked (GlcNAc...) asparagine). Aspartate 400 carries the GPI-anchor amidated aspartate lipid modification. The propeptide at 401–426 is removed in mature form; sequence AGVPLSSATLLAPLLSGLFVLWLCIQ.

The protein belongs to the repulsive guidance molecule (RGM) family. Interacts with BMP2 and BMP4. Interacts with BMP6. Interacts with BMPR1B. Interacts with TMPRSS6. In terms of processing, autocatalytically cleaved at low pH; the two chains remain linked via two disulfide bonds. Also proteolytically processed by TMPRSS6, several fragments being released in the extracellular space; regulates HJV activity in BMP signaling and thefore iron homeostasis. In terms of tissue distribution, adult and fetal liver, heart, and skeletal muscle.

The protein localises to the cell membrane. Its function is as follows. Acts as a bone morphogenetic protein (BMP) coreceptor. Through enhancement of BMP signaling regulates hepcidin (HAMP) expression and regulates iron homeostasis. The sequence is that of Hemojuvelin from Homo sapiens (Human).